Reading from the N-terminus, the 621-residue chain is Glutathione-regulated potassium-efflux system protein KefC (621 aa).

12 consecutive transmembrane segments (helical) span residues 9–29 (ALIY…LGLG), 30–50 (SVLG…RLVN), 54–74 (AILH…GLEL), 90–110 (GALQ…LLGL), 114–134 (VAEL…MQAM), 149–169 (FAVL…IPLL), 178–198 (LMAF…VVVL), 232–252 (LLLE…GVLL), 270–290 (GLLL…APWS), 296–316 (IVIL…LIAQ), 326–346 (RWFA…FGPA), and 359–379 (ALTL…VLLT). One can recognise an RCK N-terminal domain in the interval 399 to 518 (QPRVIVAGFG…AGVEAPERET (120 aa)). The interval 598-621 (GWQGTEEGRHTGDIADEPENKPSA) is disordered.

The protein belongs to the monovalent cation:proton antiporter 2 (CPA2) transporter (TC 2.A.37) family. KefC subfamily. As to quaternary structure, homodimer. Interacts with the regulatory subunit KefF.

Its subcellular location is the cell inner membrane. Its function is as follows. Pore-forming subunit of a potassium efflux system that confers protection against electrophiles. Catalyzes K(+)/H(+) antiport. This is Glutathione-regulated potassium-efflux system protein KefC from Klebsiella aerogenes (Enterobacter aerogenes).